Consider the following 1191-residue polypeptide: Puratrophin-1 (1191 aa).

Disordered regions lie at residues 1 to 152 and 707 to 728; these read MERP…DPVG and AGGG…SDPR. Phosphoserine is present on Ser64. Polar residues predominate over residues 111-120; that stretch reads SHLSLAQGES. One can recognise a DH domain in the interval 732–908; sequence RLQLVLAEMV…HFQLRHGNDL (177 aa). One can recognise a PH domain in the interval 920–1027; it reads NLKEQGQLVR…WTADISHLLW (108 aa). A disordered region spans residues 1150-1176; it reads SLTAEDSEISSQCPSASGSSGSDSSCV. Positions 1159–1176 are enriched in low complexity; it reads SSQCPSASGSSGSDSSCV.

Expressed in kidney, Leydig cells in the testis, epithelial cells in the prostate gland and Langerhans islet in the pancreas. Isoform 1 and isoform 3 are strongly expressed in Purkinje cells and to a lower extent in other neurons (at protein level). Widely expressed at low levels. More strongly expressed in testis and pancreas.

Functionally, possible role in intracellular signaling and cytoskeleton dynamics at the Golgi. The chain is Puratrophin-1 (PLEKHG4) from Homo sapiens (Human).